The primary structure comprises 29 residues: LPYPVNCKTECECVMCGLGIICKQCYYQQ.

Post-translationally, contains 3 disulfide bonds. In terms of tissue distribution, expressed by the venom gland.

It localises to the secreted. This is Neurotoxin BmK A3-6 from Olivierus martensii (Manchurian scorpion).